The sequence spans 356 residues: Histidinol-phosphate aminotransferase 1 (356 aa).

K217 bears the N6-(pyridoxal phosphate)lysine mark.

This sequence belongs to the class-II pyridoxal-phosphate-dependent aminotransferase family. Histidinol-phosphate aminotransferase subfamily. As to quaternary structure, homodimer. Requires pyridoxal 5'-phosphate as cofactor.

It carries out the reaction L-histidinol phosphate + 2-oxoglutarate = 3-(imidazol-4-yl)-2-oxopropyl phosphate + L-glutamate. It functions in the pathway amino-acid biosynthesis; L-histidine biosynthesis; L-histidine from 5-phospho-alpha-D-ribose 1-diphosphate: step 7/9. This is Histidinol-phosphate aminotransferase 1 from Burkholderia mallei (strain ATCC 23344).